A 482-amino-acid polypeptide reads, in one-letter code: Ribulose bisphosphate carboxylase large chain (482 aa).

Positions 1–2 are excised as a propeptide; the sequence is MS. Pro-3 is subject to N-acetylproline. Lys-14 carries the N6,N6,N6-trimethyllysine modification. Asn-123 and Thr-173 together coordinate substrate. The Proton acceptor role is filled by Lys-175. Position 177 (Lys-177) interacts with substrate. Positions 201, 203, and 204 each coordinate Mg(2+). Lys-201 bears the N6-carboxylysine mark. His-294 serves as the catalytic Proton acceptor. Substrate contacts are provided by Arg-295, His-327, and Ser-379.

It belongs to the RuBisCO large chain family. Type I subfamily. Heterohexadecamer of 8 large chains and 8 small chains; disulfide-linked. The disulfide link is formed within the large subunit homodimers. The cofactor is Mg(2+). The disulfide bond which can form in the large chain dimeric partners within the hexadecamer appears to be associated with oxidative stress and protein turnover.

The protein localises to the plastid. It is found in the chloroplast. The enzyme catalyses 2 (2R)-3-phosphoglycerate + 2 H(+) = D-ribulose 1,5-bisphosphate + CO2 + H2O. It carries out the reaction D-ribulose 1,5-bisphosphate + O2 = 2-phosphoglycolate + (2R)-3-phosphoglycerate + 2 H(+). Functionally, ruBisCO catalyzes two reactions: the carboxylation of D-ribulose 1,5-bisphosphate, the primary event in carbon dioxide fixation, as well as the oxidative fragmentation of the pentose substrate in the photorespiration process. Both reactions occur simultaneously and in competition at the same active site. This Stegnosperma halimifolium protein is Ribulose bisphosphate carboxylase large chain.